A 1023-amino-acid chain; its full sequence is RTX-I toxin determinant A from serotypes 1/9 (1023 aa).

The next 3 helical transmembrane spans lie at 226-256 (NNLP…ILSN), 297-326 (STTA…ADKF), and 367-406 (INSV…SGIL). Hemolysin-type calcium-binding repeat units lie at residues 730–747 (FGSR…DDEI), 748–765 (YGND…NDVI), 766–783 (HGGD…NDRL), 784–801 (IGGK…DDEL), 812–829 (LGGA…TNLF), and 830–847 (DGGV…KDIY).

This sequence belongs to the RTX prokaryotic toxin (TC 1.C.11) family. Post-translationally, palmitoylated by ApxIC. The toxin only becomes active when modified.

The protein resides in the secreted. It is found in the host cell membrane. Its function is as follows. One of the virulence factors of A.pleuropneumoniae, which has a strong hemolytic activity and is cytotoxic for alveolar macrophages and neutrophils. The protein is RTX-I toxin determinant A from serotypes 1/9 (apxIA) of Actinobacillus pleuropneumoniae (Haemophilus pleuropneumoniae).